Reading from the N-terminus, the 349-residue chain is AdoMet-dependent heme synthase (349 aa).

The 210-residue stretch at Thr5 to Glu214 folds into the Radical SAM core domain. [4Fe-4S] cluster is bound by residues Cys19, Cys23, and Cys26.

Belongs to the radical SAM superfamily. [4Fe-4S] cluster is required as a cofactor.

The enzyme catalyses Fe-coproporphyrin III + 2 S-adenosyl-L-methionine = heme b + 2 5'-deoxyadenosine + 2 L-methionine + 2 CO2. Its pathway is porphyrin-containing compound metabolism; protoheme biosynthesis. Involved in siroheme-dependent heme b biosynthesis. Catalyzes the conversion of Fe-coproporphyrin III into heme by the oxidative decarboxylation of two propionate side chains. This is AdoMet-dependent heme synthase from Methanosarcina barkeri (strain Fusaro / DSM 804).